The chain runs to 174 residues: RNA pyrophosphohydrolase (174 aa).

Positions 6–149 constitute a Nudix hydrolase domain; that stretch reads GYRPNVGIIL…KRDVYERALS (144 aa). The Nudix box signature appears at 38–59; the sequence is GGIKPGESPEAAMYRELLEEVG.

Belongs to the Nudix hydrolase family. RppH subfamily. A divalent metal cation serves as cofactor.

In terms of biological role, accelerates the degradation of transcripts by removing pyrophosphate from the 5'-end of triphosphorylated RNA, leading to a more labile monophosphorylated state that can stimulate subsequent ribonuclease cleavage. The sequence is that of RNA pyrophosphohydrolase from Chromobacterium violaceum (strain ATCC 12472 / DSM 30191 / JCM 1249 / CCUG 213 / NBRC 12614 / NCIMB 9131 / NCTC 9757 / MK).